Reading from the N-terminus, the 554-residue chain is MQFDYIIIGAGSAGNVLATRLTEDPNTTVLLLEAGGPDYRFDFRTQMPAALAYPLQGKRYNWAYETEPEPYMNHRRMECGRGKGLGGSSLINGMCYIRGNAMDLDNWAKEPGLEHWSYLDCLPYYRKAETRDIGPNDYHGGDGPVSVTTPKPGNNPLFEAMVTAGVQAGYPRTDDLNGYQQEGFGPMDRTVTPQGRRASTARGYLDQARGRPNLTIRTHALTDHIIFAGKRAVGVEWLEGESTIPSKATANKEVLLCAGAIASPQILQRSGVGNPELLRQFDIPVVHDLPGVGENLQDHLEMYLQYECKEPVSLYPALQWWNQPKIGAEWLFGGTGIGASNQFEAGGFIRSRAEFAWPNIQYHFLPVAINYNGSNAVKEHGFQCHVGSMRSPSRGHVRLKSRDPHAHPAILFNYMSHEQDWQEFRDAIRITREIMNQPALDKYRGREISPGTECQSDAELDEFVRNHAETAFHPCGTCKMGYDEMAVVDGEGRVHGLEGVRVVDASIMPQIITGNLNATTIMIGEKMADAIRGRQPLPRSTAAYYVAGGAPVRR.

Residue 4-33 (DYIIIGAGSAGNVLATRLTEDPNTTVLLLE) coordinates FAD. Histidine 473 serves as the catalytic Proton acceptor.

It belongs to the GMC oxidoreductase family. It depends on FAD as a cofactor.

The enzyme catalyses choline + A = betaine aldehyde + AH2. It catalyses the reaction betaine aldehyde + NAD(+) + H2O = glycine betaine + NADH + 2 H(+). It participates in amine and polyamine biosynthesis; betaine biosynthesis via choline pathway; betaine aldehyde from choline (cytochrome c reductase route): step 1/1. Its function is as follows. Involved in the biosynthesis of the osmoprotectant glycine betaine. Catalyzes the oxidation of choline to betaine aldehyde and betaine aldehyde to glycine betaine at the same rate. This Klebsiella pneumoniae (strain 342) protein is Oxygen-dependent choline dehydrogenase.